Reading from the N-terminus, the 146-residue chain is MLTINSIKNGIVIDHIQAGHGIKIFKYLGLEEADYRVALIMNAESSKLGKKDIIKIENIMEIDYKVLGFIDPTITIDVIENETIKEKIKLELPKTIENVIKCKNPRCITSIENYIPNEFYLVDEENGEYRCKYCDEIYSGGDINKL.

Residues cysteine 102, cysteine 107, cysteine 131, and cysteine 134 each contribute to the Zn(2+) site.

The protein belongs to the PyrI family. As to quaternary structure, contains catalytic and regulatory chains. It depends on Zn(2+) as a cofactor.

Functionally, involved in allosteric regulation of aspartate carbamoyltransferase. The polypeptide is Aspartate carbamoyltransferase regulatory chain (Clostridium botulinum (strain Okra / Type B1)).